Consider the following 593-residue polypeptide: NADH-quinone oxidoreductase subunit C/D (593 aa).

The NADH dehydrogenase I subunit C stretch occupies residues Met1 to Gln184. The NADH dehydrogenase I subunit D stretch occupies residues Asp208 to Arg593.

In the N-terminal section; belongs to the complex I 30 kDa subunit family. This sequence in the C-terminal section; belongs to the complex I 49 kDa subunit family. NDH-1 is composed of 13 different subunits. Subunits NuoB, CD, E, F, and G constitute the peripheral sector of the complex.

It is found in the cell inner membrane. It catalyses the reaction a quinone + NADH + 5 H(+)(in) = a quinol + NAD(+) + 4 H(+)(out). Functionally, NDH-1 shuttles electrons from NADH, via FMN and iron-sulfur (Fe-S) centers, to quinones in the respiratory chain. The immediate electron acceptor for the enzyme in this species is believed to be ubiquinone. Couples the redox reaction to proton translocation (for every two electrons transferred, four hydrogen ions are translocated across the cytoplasmic membrane), and thus conserves the redox energy in a proton gradient. The sequence is that of NADH-quinone oxidoreductase subunit C/D from Pseudomonas syringae pv. syringae (strain B728a).